The primary structure comprises 697 residues: Probable glutamine--tRNA ligase (697 aa).

The short motif at Pro204–His214 is the 'HIGH' region element. ATP contacts are provided by residues Glu205–Asn207 and His211–Ala217. Residues Asp237 and Tyr386 each coordinate L-glutamine. ATP contacts are provided by residues Thr405, Arg434–Leu435, and Leu442–Lys444. Residues Val441–Arg445 carry the 'KMSKS' region motif.

This sequence belongs to the class-I aminoacyl-tRNA synthetase family.

The catalysed reaction is tRNA(Gln) + L-glutamine + ATP = L-glutaminyl-tRNA(Gln) + AMP + diphosphate. The polypeptide is Probable glutamine--tRNA ligase (Encephalitozoon cuniculi (strain GB-M1) (Microsporidian parasite)).